A 238-amino-acid chain; its full sequence is Ribonuclease PH (238 aa).

Residues arginine 86 and 124 to 126 contribute to the phosphate site; that span reads GTR.

This sequence belongs to the RNase PH family. Homohexameric ring arranged as a trimer of dimers.

It catalyses the reaction tRNA(n+1) + phosphate = tRNA(n) + a ribonucleoside 5'-diphosphate. Phosphorolytic 3'-5' exoribonuclease that plays an important role in tRNA 3'-end maturation. Removes nucleotide residues following the 3'-CCA terminus of tRNAs; can also add nucleotides to the ends of RNA molecules by using nucleoside diphosphates as substrates, but this may not be physiologically important. Probably plays a role in initiation of 16S rRNA degradation (leading to ribosome degradation) during starvation. The protein is Ribonuclease PH of Proteus mirabilis (strain HI4320).